The following is a 308-amino-acid chain: 11-beta-hydroxysteroid dehydrogenase-like 2 (308 aa).

Residues Phe10–Thr30 form a helical; Signal-anchor for type II membrane protein membrane-spanning segment. NADP(+)-binding positions include Gly53–Arg79 and Asp104. Ser183 contributes to the substrate binding site. Tyr196 serves as the catalytic Proton acceptor. NADP(+) contacts are provided by residues Tyr196–Lys200 and Lys200.

The protein belongs to the short-chain dehydrogenases/reductases (SDR) family.

It is found in the membrane. The protein is 11-beta-hydroxysteroid dehydrogenase-like 2 (HSD2) of Arabidopsis thaliana (Mouse-ear cress).